The following is a 124-amino-acid chain: uncharacterized protein (124 aa).

A signal peptide spans 1–23 (MHKLLKLLSITLIGLSVATGVQA).

Belongs to the cytochrome b562 family.

This is an uncharacterized protein from Pasteurella multocida (strain Pm70).